Here is a 137-residue protein sequence, read N- to C-terminus: Basic phospholipase A2 homolog Cax-K49 (137 aa).

An N-terminal signal peptide occupies residues 1-16; the sequence is MRTFWIVAMLLVGVEG. 7 disulfides stabilise this stretch: cysteine 42–cysteine 131, cysteine 44–cysteine 60, cysteine 59–cysteine 111, cysteine 65–cysteine 137, cysteine 66–cysteine 104, cysteine 73–cysteine 97, and cysteine 91–cysteine 102. An important for membrane-damaging activities in eukaryotes and bacteria; heparin-binding region spans residues 121-133; it reads KKYKIYPKFLCKK.

In terms of assembly, homodimer; non-covalently linked. In terms of tissue distribution, expressed by the venom gland.

It is found in the secreted. Snake venom phospholipase A2 homolog that lacks enzymatic activity. Displays edema-inducing activities and may be myotoxic. A model of myotoxic mechanism has been proposed: an apo Lys49-PLA2 is activated by the entrance of a hydrophobic molecule (e.g. fatty acid) at the hydrophobic channel of the protein leading to a reorientation of a monomer. This reorientation causes a transition between 'inactive' to 'active' states, causing alignment of C-terminal and membrane-docking sites (MDoS) side-by-side and putting the membrane-disruption sites (MDiS) in the same plane, exposed to solvent and in a symmetric position for both monomers. The MDoS region stabilizes the toxin on membrane by the interaction of charged residues with phospholipid head groups. Subsequently, the MDiS region destabilizes the membrane with penetration of hydrophobic residues. This insertion causes a disorganization of the membrane, allowing an uncontrolled influx of ions (i.e. calcium and sodium), and eventually triggering irreversible intracellular alterations and cell death. The sequence is that of Basic phospholipase A2 homolog Cax-K49 from Crotalus atrox (Western diamondback rattlesnake).